We begin with the raw amino-acid sequence, 1338 residues long: Serine/threonine-protein kinase cek1 (1338 aa).

The PAS domain maps to Ser-28–Asp-98. Residues Pro-484–Arg-554 form a disordered region. Residues Pro-491–Ser-501 are compositionally biased toward polar residues. Ser-525 carries the phosphoserine modification. Polar residues predominate over residues Pro-541 to Phe-550. In terms of domain architecture, Protein kinase spans Tyr-589 to Phe-958. ATP contacts are provided by residues Ile-595–Val-603 and Lys-618. Asp-713 serves as the catalytic Proton acceptor. Ser-748 is modified (phosphoserine). Residues Glu-813–Pro-842 show a composition bias toward polar residues. 3 disordered regions span residues Glu-813 to Val-844, Lys-1010 to Asn-1035, and Ser-1159 to Asp-1185. The region spanning Lys-959–Asn-1057 is the AGC-kinase C-terminal domain. The segment covering Ser-1159 to Ala-1174 has biased composition (low complexity). Ser-1211 carries the phosphoserine modification.

The protein belongs to the protein kinase superfamily. Ser/Thr protein kinase family.

It carries out the reaction L-seryl-[protein] + ATP = O-phospho-L-seryl-[protein] + ADP + H(+). The catalysed reaction is L-threonyl-[protein] + ATP = O-phospho-L-threonyl-[protein] + ADP + H(+). Functionally, may facilitate the progression of anaphase through direct or indirect interaction with the cut8 protein. The polypeptide is Serine/threonine-protein kinase cek1 (cek1) (Schizosaccharomyces pombe (strain 972 / ATCC 24843) (Fission yeast)).